The following is a 73-amino-acid chain: DNA gyrase inhibitor YacG (73 aa).

Zn(2+)-binding residues include cysteine 14, cysteine 17, cysteine 30, and cysteine 34. Positions 54–73 (AEQADDTAGPGAAEDDTDSH) are disordered.

Belongs to the DNA gyrase inhibitor YacG family. As to quaternary structure, interacts with GyrB. Zn(2+) is required as a cofactor.

Inhibits all the catalytic activities of DNA gyrase by preventing its interaction with DNA. Acts by binding directly to the C-terminal domain of GyrB, which probably disrupts DNA binding by the gyrase. The chain is DNA gyrase inhibitor YacG from Hyphomonas neptunium (strain ATCC 15444).